We begin with the raw amino-acid sequence, 363 residues long: Uptake hydrogenase small subunit (363 aa).

Residues 1 to 43 constitute a signal peptide (tat-type signal); the sequence is MIETFYEVMRRQGISRRSFLKYCSLTATSLGLSPVFVPKIVHA. [4Fe-4S] cluster-binding residues include Cys60, Cys63, Cys158, Cys192, His230, Cys233, Cys258, and Cys264. The [3Fe-4S] cluster site is built by Cys273, Cys292, and Cys295.

The protein belongs to the [NiFe]/[NiFeSe] hydrogenase small subunit family. As to quaternary structure, heterodimer of a large and a small subunit. It depends on [4Fe-4S] cluster as a cofactor. [3Fe-4S] cluster serves as cofactor. Post-translationally, predicted to be exported by the Tat system. The position of the signal peptide cleavage has not been experimentally proven.

The protein resides in the cell membrane. The catalysed reaction is H2 + A = AH2. Functionally, this enzyme recycles the H(2) produced by nitrogenase to increase the production of ATP and to protect nitrogenase against inhibition or damage by O(2) under carbon- or phosphate-limited conditions. This chain is Uptake hydrogenase small subunit (hupS), found in Alcaligenes hydrogenophilus.